The sequence spans 533 residues: MNSPVDRILIFDTTLRDGEQSPGATLTVEEKLSIARALARLGVDIIEAGFPFASPGDFEAVQKIAQTVGTENGPVICGLARATQKDIKAAAEALKPAAKHRIHTFLATSDIHLEHKLKKTRAEVLAIVPEMVAYAKSLVNDIEFSPEDAGRSDPEFLYQVLEAAISAGATTINIPDTVGYTTPAEYGALIKGIADNVPNIDQAIISVHGHNDLGLAVANFLEAVKNGARQLECTINGIGERAGNAALEELVMALHVRRSYFNPFLGRPADSTAPLTNIDTKHIYATSRLVSELTGMMVQPNKAIVGANAFAHESGIHQDGVLKNKLTYEIMDAESIGLTNNQIVLGKLSGRNAFGTRLKELGFDLSDTELNNAFIRFKEVADKRKEITDWDLEAIVNDEIRQPPELFRLERVQVSCGEPSVPTATLTIRTPAGPEETAVAIGTGPVDAVYKAINQIVQLPNELLEYSVTSVTEGIDALGKVSVRLRHNGVIYTGYAANTDIIVASARAYLGALNRLYAALEKSREHPPVVASL.

Residues 8 to 269 (ILIFDTTLRD…YFNPFLGRPA (262 aa)) enclose the Pyruvate carboxyltransferase domain. The Mn(2+) site is built by Asp-17, His-208, His-210, and Asn-244. Positions 408–533 (RLERVQVSCG…REHPPVVASL (126 aa)) are regulatory domain.

The protein belongs to the alpha-IPM synthase/homocitrate synthase family. LeuA type 1 subfamily. Homodimer. The cofactor is Mn(2+).

Its subcellular location is the cytoplasm. The catalysed reaction is 3-methyl-2-oxobutanoate + acetyl-CoA + H2O = (2S)-2-isopropylmalate + CoA + H(+). It participates in amino-acid biosynthesis; L-leucine biosynthesis; L-leucine from 3-methyl-2-oxobutanoate: step 1/4. Its function is as follows. Catalyzes the condensation of the acetyl group of acetyl-CoA with 3-methyl-2-oxobutanoate (2-ketoisovalerate) to form 3-carboxy-3-hydroxy-4-methylpentanoate (2-isopropylmalate). The polypeptide is 2-isopropylmalate synthase (Synechocystis sp. (strain ATCC 27184 / PCC 6803 / Kazusa)).